Here is a 147-residue protein sequence, read N- to C-terminus: uncharacterized protein (147 aa).

Residues K4 to W120 enclose the CMP/dCMP-type deaminase domain. H67 is a Zn(2+) binding site. E69 (proton donor) is an active-site residue. Zn(2+) is bound by residues C92 and C95.

Belongs to the cytidine and deoxycytidylate deaminase family. It depends on Zn(2+) as a cofactor.

This is an uncharacterized protein from Aliivibrio fischeri (Vibrio fischeri).